The sequence spans 31 residues: MNIDIVSMAWAALMVVFTFSLSLVIWGRSGL.

A helical transmembrane segment spans residues 5–25; the sequence is IVSMAWAALMVVFTFSLSLVI.

Belongs to the PetN family. As to quaternary structure, the 4 large subunits of the cytochrome b6-f complex are cytochrome b6, subunit IV (17 kDa polypeptide, PetD), cytochrome f and the Rieske protein, while the 4 small subunits are PetG, PetL, PetM and PetN. The complex functions as a dimer.

The protein localises to the plastid membrane. Its function is as follows. Component of the cytochrome b6-f complex, which mediates electron transfer between photosystem II (PSII) and photosystem I (PSI), cyclic electron flow around PSI, and state transitions. In Cuscuta gronovii (Common dodder), this protein is Cytochrome b6-f complex subunit 8.